A 440-amino-acid chain; its full sequence is Trigger factor (440 aa).

The PPIase FKBP-type domain occupies 176 to 261 (GDKVVIDYQN…VKSIYVVKDV (86 aa)).

It belongs to the FKBP-type PPIase family. Tig subfamily.

The protein resides in the cytoplasm. It catalyses the reaction [protein]-peptidylproline (omega=180) = [protein]-peptidylproline (omega=0). In terms of biological role, involved in protein export. Acts as a chaperone by maintaining the newly synthesized protein in an open conformation. Functions as a peptidyl-prolyl cis-trans isomerase. The protein is Trigger factor of Ehrlichia canis (strain Jake).